Reading from the N-terminus, the 252-residue chain is Ribosome maturation factor RimP (252 aa).

The disordered stretch occupies residues 188 to 252 (QGAAPGTEGG…PAAGPGAQDE (65 aa)). A compositionally biased stretch (basic residues) spans 208 to 224 (ARRPHQPKPKKAKKKGP).

The protein belongs to the RimP family.

Its subcellular location is the cytoplasm. Required for maturation of 30S ribosomal subunits. In Rhodospirillum centenum (strain ATCC 51521 / SW), this protein is Ribosome maturation factor RimP.